Here is a 368-residue protein sequence, read N- to C-terminus: MNKTITALAIMMASFAANASVLPETPVPFKSGTGAIDNDTVYIGLGSAGTAWYKLDTQAKDKKWTALAAFPGGPRDQATSAFIDGNLYVFGGIGKNSKGLTQVFNDVHKYNPKTNSWVKLMSHAPMGMAGHVTFVHNGKAYVTGGVNQNIFNGYFEDLNEAGKDSATIDKINAHYFDKKAEDYFFNKFLLSFDPSTQQWSYAGESPWYGTAGAAVVNKGDKTWLINGEAKPGLRTDAVFELDFTGNNLKWNKLAPVSSPDGVAGGFAGISNDSLIFAGGAGFKGSRENYQNGKNYAHEGLKKSYSTDIHLWHNGKWDKSGELSQGRAYGVSLPWNNSLLIIGGETAGGKAVTDSVLISVKDNKVTVQN.

An N-terminal signal peptide occupies residues 1-19 (MNKTITALAIMMASFAANA). Kelch repeat units lie at residues 40–84 (TVYI…AFID), 86–137 (NLYV…FVHN), 139–173 (KAYV…KINA), 174–219 (HYFD…VNKG), 222–265 (TWLI…VAGG), 287–336 (ENYQ…PWNN), and 338–367 (LLII…VTVQ). E228 serves as the catalytic Proton acceptor.

It belongs to the NanM family. As to quaternary structure, homodimer.

The protein resides in the periplasm. The catalysed reaction is N-acetyl-alpha-neuraminate = N-acetyl-beta-neuraminate. In terms of biological role, converts alpha-N-acetylneuranimic acid (Neu5Ac) to the beta-anomer, accelerating the equilibrium between the alpha- and beta-anomers. Probably facilitates sialidase-negative bacteria to compete successfully for limited amounts of extracellular Neu5Ac, which is likely taken up in the beta-anomer. In addition, the rapid removal of sialic acid from solution might be advantageous to the bacterium to damp down host responses. This chain is N-acetylneuraminate epimerase, found in Escherichia coli O9:H4 (strain HS).